We begin with the raw amino-acid sequence, 816 residues long: tRNA(Met) cytidine acetyltransferase TmcA (816 aa).

The ATP site is built by Q265 and R439. The region spanning 469-664 (ELIRKMEVYL…YTAIVIKPIS (196 aa)) is the N-acetyltransferase domain. Acetyl-CoA is bound by residues 589 to 591 (IAT), E629, and R636.

Belongs to the TmcA family.

The protein localises to the cytoplasm. The enzyme catalyses cytidine(34) in elongator tRNA(Met) + acetyl-CoA + ATP + H2O = N(4)-acetylcytidine(34) in elongator tRNA(Met) + ADP + phosphate + CoA + H(+). It carries out the reaction a cytidine in RNA + acetyl-CoA + ATP + H2O = an N(4)-acetylcytidine in RNA + ADP + phosphate + CoA + H(+). It catalyses the reaction a cytidine in tRNA + acetyl-CoA + ATP + H2O = an N(4)-acetylcytidine in tRNA + ADP + phosphate + CoA + H(+). The catalysed reaction is a cytidine in mRNA + acetyl-CoA + ATP + H2O = an N(4)-acetylcytidine in mRNA + ADP + phosphate + CoA + H(+). Catalyzes the formation of N(4)-acetylcytidine (ac(4)C) at the wobble position of tRNA(Met), by using acetyl-CoA as an acetyl donor and ATP (or GTP). In terms of biological role, catalyzes the formation of 233 N(4)-acetylcytidine (ac(4)C) sites in RNA, on the middle C of a CCG motif. Modifications are found in rRNA, ncRNA, mRNA and tRNA. More acetylation is observed at 85 than at 65 or 75 degrees Celsius. The polypeptide is tRNA(Met) cytidine acetyltransferase TmcA (Pyrococcus furiosus (strain ATCC 43587 / DSM 3638 / JCM 8422 / Vc1)).